The sequence spans 543 residues: Carboxypeptidase Y homolog A (543 aa).

The signal sequence occupies residues 1-17 (MRVLPATLLVGAATAAA). Positions 18-124 (PPFQQILGLP…KLEAYDLRVK (107 aa)) are excised as a propeptide. Cystine bridges form between cysteine 179–cysteine 419, cysteine 313–cysteine 327, cysteine 337–cysteine 360, cysteine 344–cysteine 353, and cysteine 382–cysteine 389. Asparagine 210 carries N-linked (GlcNAc...) asparagine glycosylation. Residue serine 266 is part of the active site. Aspartate 458 is an active-site residue. Asparagine 509 carries N-linked (GlcNAc...) asparagine glycosylation. Residue histidine 520 is part of the active site.

The protein belongs to the peptidase S10 family.

The protein localises to the vacuole. The catalysed reaction is Release of a C-terminal amino acid with broad specificity.. Its function is as follows. Vacuolar carboxypeptidase involved in degradation of small peptides. Digests preferentially peptides containing an aliphatic or hydrophobic residue in P1' position, as well as methionine, leucine or phenylalanine in P1 position of ester substrate. This chain is Carboxypeptidase Y homolog A (cpyA), found in Neosartorya fischeri (strain ATCC 1020 / DSM 3700 / CBS 544.65 / FGSC A1164 / JCM 1740 / NRRL 181 / WB 181) (Aspergillus fischerianus).